A 225-amino-acid polypeptide reads, in one-letter code: MDIVFALGGSVLMPKDGASAENIKSYAQVFKKLKDMGHNVSIVVGGGNTAREYIKVSREFTNESVCDEIGIMATRMNAMLLISALSKYSVNFVPTNFKDAEMILNLGKILVMGGTHPAHTTDAVSATLAEFTNADLLVIATNVDGVYTKDPRTNNDAKKLEKMTTKELIEITGSNSISAGSSSVVDSLASKIIDRAKLKTIVVKGTPDEILKSVLGGHDGTIIIP.

Residue 9-10 (GS) participates in ATP binding. G46 contacts UMP. Residues G47 and R51 each contribute to the ATP site. UMP contacts are provided by residues D67 and 115 to 121 (THPAHTT). 4 residues coordinate ATP: T141, N142, Y147, and D150.

It belongs to the UMP kinase family. Homohexamer.

Its subcellular location is the cytoplasm. The enzyme catalyses UMP + ATP = UDP + ADP. It participates in pyrimidine metabolism; CTP biosynthesis via de novo pathway; UDP from UMP (UMPK route): step 1/1. With respect to regulation, inhibited by UTP. In terms of biological role, catalyzes the reversible phosphorylation of UMP to UDP. This Methanococcus vannielii (strain ATCC 35089 / DSM 1224 / JCM 13029 / OCM 148 / SB) protein is Uridylate kinase.